We begin with the raw amino-acid sequence, 674 residues long: Probable protein phosphatase 2C 66 (674 aa).

Residue Ser-125 is modified to Phosphoserine. 2 disordered regions span residues 153–175 (YSGP…RKKP) and 202–247 (KSVI…KQSM). Residues 244-665 (KQSMNSVLDV…DDVSVIVISL (422 aa)) enclose the PPM-type phosphatase domain. Mn(2+) is bound by residues Asp-282 and Gly-283. Basic and acidic residues predominate over residues 373 to 384 (NNKTKSDNRCDQ). The interval 373–392 (NNKTKSDNRCDQKGSNSTTT) is disordered. Residues Asp-593 and Asp-656 each coordinate Mn(2+).

The protein belongs to the PP2C family. It depends on Mg(2+) as a cofactor. Mn(2+) is required as a cofactor. As to expression, expressed at low level in seedlings, roots, leaves, stems, young inflorescences, flowers and siliques.

It localises to the nucleus. The enzyme catalyses O-phospho-L-seryl-[protein] + H2O = L-seryl-[protein] + phosphate. It carries out the reaction O-phospho-L-threonyl-[protein] + H2O = L-threonyl-[protein] + phosphate. This chain is Probable protein phosphatase 2C 66 (PLL2), found in Arabidopsis thaliana (Mouse-ear cress).